We begin with the raw amino-acid sequence, 390 residues long: NADH-quinone oxidoreductase subunit D (390 aa).

Belongs to the complex I 49 kDa subunit family. NDH-1 is composed of 14 different subunits. Subunits NuoB, C, D, E, F, and G constitute the peripheral sector of the complex.

It localises to the cell inner membrane. It carries out the reaction a quinone + NADH + 5 H(+)(in) = a quinol + NAD(+) + 4 H(+)(out). Its function is as follows. NDH-1 shuttles electrons from NADH, via FMN and iron-sulfur (Fe-S) centers, to quinones in the respiratory chain. The immediate electron acceptor for the enzyme in this species is believed to be ubiquinone. Couples the redox reaction to proton translocation (for every two electrons transferred, four hydrogen ions are translocated across the cytoplasmic membrane), and thus conserves the redox energy in a proton gradient. The sequence is that of NADH-quinone oxidoreductase subunit D from Geobacter metallireducens (strain ATCC 53774 / DSM 7210 / GS-15).